Consider the following 316-residue polypeptide: Mannose-6-phosphate isomerase (316 aa).

Residues Gln95, His97, Glu114, and His171 each coordinate Zn(2+). The active site involves Arg191.

It belongs to the mannose-6-phosphate isomerase type 1 family. It depends on Zn(2+) as a cofactor.

It catalyses the reaction D-mannose 6-phosphate = D-fructose 6-phosphate. In Streptococcus mutans serotype c (strain ATCC 700610 / UA159), this protein is Mannose-6-phosphate isomerase (pmi).